We begin with the raw amino-acid sequence, 545 residues long: MDFVQHALLTASRGALTMSLNSSLSYRKELSNLTATEGGEGGAVSEFIAIIIITVLVCLGNLVIVVTLYKKSYLLTLSNKFVFSLTLSNFLLSVLVLPFVVTSSIRREWIFGVVWCNFSALLYLLISSASMLTLGVIAIDRYYAVLYPMVYPMKITGNRAVMALVYIWLHSLIGCLPPLFGWSSVEFDEFKWMCVAAWHQEPGYTIFWQIWCALFPFLIMLVCYGFIFRVARVKARKVHCGTVVTVEEDSQRSGRKNSSTSTSSSGSRRNALQGVVYSANQCKALITILVVIGAFMVTWGPYMVVITSEALWGKNCVSPTLETWATWLSFTSAICHPLIYGLWNKTVRKELLGMCFGDRYYRESFVQRQRTSRLFSISNRITDLGLSPHLTALMAGGQSLGHSSSTGDTGFSYSQDSGTDVMLLEDGTSEDNPPQHCTCPPKRRSSVTFEDEVEQIKEAAKNSLLHVKAEVHKSLDSYAASLAKAIEAEAKINLFGEEALPGVLFTARTVPGAGFGGRRGSRTLVNQRLQLQSIKEGNVLAAEQR.

At 1-46 (MDFVQHALLTASRGALTMSLNSSLSYRKELSNLTATEGGEGGAVSE) the chain is on the extracellular side. N-linked (GlcNAc...) asparagine glycosylation is found at N21 and N32. The helical transmembrane segment at 47–67 (FIAIIIITVLVCLGNLVIVVT) threads the bilayer. At 68–80 (LYKKSYLLTLSNK) the chain is on the cytoplasmic side. The chain crosses the membrane as a helical span at residues 81–101 (FVFSLTLSNFLLSVLVLPFVV). Topologically, residues 102 to 117 (TSSIRREWIFGVVWCN) are extracellular. A disulfide bridge links C116 with C194. N117 carries an N-linked (GlcNAc...) asparagine glycan. The helical transmembrane segment at 118–139 (FSALLYLLISSASMLTLGVIAI) threads the bilayer. The Cytoplasmic portion of the chain corresponds to 140 to 159 (DRYYAVLYPMVYPMKITGNR). The chain crosses the membrane as a helical span at residues 160 to 180 (AVMALVYIWLHSLIGCLPPLF). Residues 181 to 205 (GWSSVEFDEFKWMCVAAWHQEPGYT) are Extracellular-facing. Residues 206–226 (IFWQIWCALFPFLIMLVCYGF) form a helical membrane-spanning segment. Topologically, residues 227–285 (IFRVARVKARKVHCGTVVTVEEDSQRSGRKNSSTSTSSSGSRRNALQGVVYSANQCKAL) are cytoplasmic. The chain crosses the membrane as a helical span at residues 286–306 (ITILVVIGAFMVTWGPYMVVI). Residues 307–322 (TSEALWGKNCVSPTLE) are Extracellular-facing. A helical transmembrane segment spans residues 323–343 (TWATWLSFTSAICHPLIYGLW). Residues 344 to 545 (NKTVRKELLG…EGNVLAAEQR (202 aa)) lie on the Cytoplasmic side of the membrane.

It belongs to the G-protein coupled receptor 1 family.

It localises to the cell projection. It is found in the cilium membrane. Its subcellular location is the cell membrane. Functionally, key negative regulator of Shh signaling, which promotes the processing of GLI3 into GLI3R during neural tube development. Recruited by TULP3 and the IFT-A complex to primary cilia and acts as a regulator of the PKA-dependent basal repression machinery in Shh signaling by increasing cAMP levels, leading to promote the PKA-dependent processing of GLI3 into GLI3R and repress the Shh signaling. In presence of SHH, it is removed from primary cilia and is internalized into recycling endosomes, preventing its activity and allowing activation of the Shh signaling. Its ligand is unknown. The chain is G-protein coupled receptor 161 (Gpr161) from Mus musculus (Mouse).